A 304-amino-acid chain; its full sequence is Acetylglutamate kinase (304 aa).

Residues 82 to 83, Arg-104, and Asn-197 each bind substrate; that span reads GG.

Belongs to the acetylglutamate kinase family. ArgB subfamily.

The protein localises to the cytoplasm. The catalysed reaction is N-acetyl-L-glutamate + ATP = N-acetyl-L-glutamyl 5-phosphate + ADP. It functions in the pathway amino-acid biosynthesis; L-arginine biosynthesis; N(2)-acetyl-L-ornithine from L-glutamate: step 2/4. In terms of biological role, catalyzes the ATP-dependent phosphorylation of N-acetyl-L-glutamate. The chain is Acetylglutamate kinase from Prochlorococcus marinus (strain SARG / CCMP1375 / SS120).